A 201-amino-acid chain; its full sequence is Riboflavin synthase (201 aa).

2 Lumazine-binding repeats span residues 1-97 (MFTG…LGGH) and 98-197 (IVQG…ERLM). Residues 4–6 (GIV), 47–49 (CLT), 62–67 (DVMAET), 101–103 (GHV), Lys136, 145–147 (SLT), and 162–167 (SLIPTT) each bind 2,4-dihydroxypteridine.

Homotrimer.

The enzyme catalyses 2 6,7-dimethyl-8-(1-D-ribityl)lumazine + H(+) = 5-amino-6-(D-ribitylamino)uracil + riboflavin. It functions in the pathway cofactor biosynthesis; riboflavin biosynthesis; riboflavin from 2-hydroxy-3-oxobutyl phosphate and 5-amino-6-(D-ribitylamino)uracil: step 2/2. Its function is as follows. Catalyzes the dismutation of two molecules of 6,7-dimethyl-8-ribityllumazine, resulting in the formation of riboflavin and 5-amino-6-(D-ribitylamino)uracil. This Mycobacterium bovis (strain ATCC BAA-935 / AF2122/97) protein is Riboflavin synthase (ribE).